We begin with the raw amino-acid sequence, 252 residues long: Membrane protein insertase YidC (252 aa).

The signal sequence occupies residues 1 to 19; the sequence is MKKVLWIIIIILMVGALAG. The N-palmitoyl cysteine moiety is linked to residue cysteine 20. The S-diacylglycerol cysteine moiety is linked to residue cysteine 20. Helical transmembrane passes span 34–54, 58–78, 131–151, 162–182, 201–221, and 223–243; these read IWNH…ADLL, FGLS…PLMI, MAGC…YFAI, FLWF…VAGI, VIIY…PSAL, and LYWV…VVRF.

Belongs to the OXA1/ALB3/YidC family. Type 2 subfamily.

The protein localises to the cell membrane. In terms of biological role, required for the insertion and/or proper folding and/or complex formation of integral membrane proteins into the membrane. Involved in integration of membrane proteins that insert both dependently and independently of the Sec translocase complex, as well as at least some lipoproteins. This Alkalihalophilus pseudofirmus (strain ATCC BAA-2126 / JCM 17055 / OF4) (Bacillus pseudofirmus) protein is Membrane protein insertase YidC.